The following is a 158-amino-acid chain: Eukaryotic translation initiation factor 5A-3 (158 aa).

A compositionally biased stretch (basic and acidic residues) spans 1 to 10 (MSDDEHHFES). Positions 1 to 23 (MSDDEHHFESSDAGASKTYPQQA) are disordered. At Ser-2 the chain carries Phosphoserine. A Hypusine modification is found at Lys-51.

The protein belongs to the eIF-5A family. In terms of processing, lys-52 undergoes hypusination, a unique post-translational modification that consists in the addition of a butylamino group from spermidine to lysine side chain, leading to the formation of the unusual amino acid hypusine. eIF-5As are the only known proteins to undergo this modification, which is essential for their function. Expressed in the vascular tissues of roots, stems and leaves. Localized in phloem companion cells rather than sieve-tube members. Not expressed in xylem or procambium. Detected in root tips and in the chalazal tissue of fertilized ovules.

Functionally, translation factor that promotes translation elongation and termination, particularly upon ribosome stalling at specific amino acid sequence contexts. Binds between the exit (E) and peptidyl (P) site of the ribosome and promotes rescue of stalled ribosome: specifically required for efficient translation of polyproline-containing peptides as well as other motifs that stall the ribosome. Acts as a ribosome quality control (RQC) cofactor by joining the RQC complex to facilitate peptidyl transfer during CAT tailing step. Involved in supporting growth and plays a regulatory role in the response to sub-lethal osmotic and nutrient stress. The polypeptide is Eukaryotic translation initiation factor 5A-3 (ELF5A-3) (Arabidopsis thaliana (Mouse-ear cress)).